Consider the following 78-residue polypeptide: Metallothionein-like protein type 2 (78 aa).

Belongs to the metallothionein superfamily. Type 15 family.

In terms of biological role, metallothioneins have a high content of cysteine residues that bind various heavy metals. This Nicotiana glutinosa (Tobacco) protein is Metallothionein-like protein type 2.